Reading from the N-terminus, the 426-residue chain is PHD finger-containing protein 6 (426 aa).

Residues 9-59 form a PHD-type zinc finger; sequence RSICETCGHQGWKNSLVTCSKCRIACEHCYCMRESSFETSIHFVCADCSMR. Zn(2+) is bound by residues Cys12, Cys15, Cys27, Cys30, His36, Cys39, Cys53, and Cys56. 2 disordered regions span residues 122 to 144 and 185 to 205; these read TFRV…TAGF and RQAS…GDGA.

Interacts directly with AIPP3/BDT1.

Together with AIPP3/BDT1, cooperates to form a BAH-PHD bivalent histone reader complex able to read histone H3 lysine 27 trimethylation (H3K27me3) histone marks in order to regulate transcription, especially to prevent early flowering; promotes AIPP3/BDT1 binding to H3K27me3. This is PHD finger-containing protein 6 from Arabidopsis thaliana (Mouse-ear cress).